Consider the following 119-residue polypeptide: Large ribosomal subunit protein uL24 (119 aa).

It belongs to the universal ribosomal protein uL24 family. As to quaternary structure, part of the 50S ribosomal subunit.

In terms of biological role, one of two assembly initiator proteins, it binds directly to the 5'-end of the 23S rRNA, where it nucleates assembly of the 50S subunit. Functionally, located at the polypeptide exit tunnel on the outside of the subunit. This chain is Large ribosomal subunit protein uL24, found in Methanococcus vannielii.